The chain runs to 200 residues: Ribonuclease HII (200 aa).

In terms of domain architecture, RNase H type-2 spans methionine 1–isoleucine 200. A divalent metal cation is bound by residues aspartate 7, glutamate 8, and aspartate 99.

Belongs to the RNase HII family. Requires Mn(2+) as cofactor. Mg(2+) serves as cofactor.

It is found in the cytoplasm. The catalysed reaction is Endonucleolytic cleavage to 5'-phosphomonoester.. Endonuclease that specifically degrades the RNA of RNA-DNA hybrids. This chain is Ribonuclease HII, found in Nanoarchaeum equitans (strain Kin4-M).